The primary structure comprises 376 residues: UPF0284 protein glr4139 (376 aa).

Belongs to the UPF0284 family.

The chain is UPF0284 protein glr4139 from Gloeobacter violaceus (strain ATCC 29082 / PCC 7421).